A 148-amino-acid polypeptide reads, in one-letter code: Lysozyme C, non-stomach isozyme (148 aa).

Residues 1 to 18 (MKALLILGLLLFSVAVQG) form the signal peptide. Positions 19–148 (KVFERCELAR…LTSYIQGCGV (130 aa)) constitute a C-type lysozyme domain. Intrachain disulfides connect C24–C146, C48–C134, C83–C99, and C95–C113. Catalysis depends on residues E53 and D71.

The protein belongs to the glycosyl hydrolase 22 family. As to expression, expressed in blood cells.

It carries out the reaction Hydrolysis of (1-&gt;4)-beta-linkages between N-acetylmuramic acid and N-acetyl-D-glucosamine residues in a peptidoglycan and between N-acetyl-D-glucosamine residues in chitodextrins.. Its function is as follows. Lysozymes have primarily a bacteriolytic function; those in tissues and body fluids are associated with the monocyte-macrophage system and enhance the activity of immunoagents. In Bos taurus (Bovine), this protein is Lysozyme C, non-stomach isozyme (LYS).